The following is a 545-amino-acid chain: Glucose-6-phosphate isomerase (545 aa).

The active-site Proton donor is the Glu351. Active-site residues include His382 and Lys510.

The protein belongs to the GPI family.

It is found in the cytoplasm. It catalyses the reaction alpha-D-glucose 6-phosphate = beta-D-fructose 6-phosphate. Its pathway is carbohydrate biosynthesis; gluconeogenesis. The protein operates within carbohydrate degradation; glycolysis; D-glyceraldehyde 3-phosphate and glycerone phosphate from D-glucose: step 2/4. Its function is as follows. Catalyzes the reversible isomerization of glucose-6-phosphate to fructose-6-phosphate. The sequence is that of Glucose-6-phosphate isomerase from Shewanella sp. (strain MR-7).